The following is a 65-amino-acid chain: Large ribosomal subunit protein bL35 (65 aa).

Positions 1 to 26 (MPKMKTHRGAAKRFRKTGTGKLKRGK) are disordered.

The protein belongs to the bacterial ribosomal protein bL35 family.

This chain is Large ribosomal subunit protein bL35, found in Clostridium beijerinckii (strain ATCC 51743 / NCIMB 8052) (Clostridium acetobutylicum).